Consider the following 475-residue polypeptide: ATP synthase subunit beta, chloroplastic (475 aa).

Residue 156–163 participates in ATP binding; the sequence is GGAGVGKT.

The protein belongs to the ATPase alpha/beta chains family. As to quaternary structure, F-type ATPases have 2 components, CF(1) - the catalytic core - and CF(0) - the membrane proton channel. CF(1) has five subunits: alpha(3), beta(3), gamma(1), delta(1), epsilon(1). CF(0) has four main subunits: a(1), b(1), b'(1) and c(9-12).

The protein localises to the plastid. The protein resides in the chloroplast thylakoid membrane. The catalysed reaction is ATP + H2O + 4 H(+)(in) = ADP + phosphate + 5 H(+)(out). In terms of biological role, produces ATP from ADP in the presence of a proton gradient across the membrane. The catalytic sites are hosted primarily by the beta subunits. The protein is ATP synthase subunit beta, chloroplastic of Phaeodactylum tricornutum (strain CCAP 1055/1).